A 484-amino-acid chain; its full sequence is Adenylosuccinate lyase (484 aa).

Alanine 2 bears the N-acetylalanine mark. Substrate-binding positions include 20–21 (RY), 85–87 (RHD), and 111–112 (TS). N6-acetyllysine is present on lysine 147. Histidine 159 functions as the Proton donor/acceptor in the catalytic mechanism. Residue glutamine 241 participates in substrate binding. Serine 289 (proton donor/acceptor) is an active-site residue. Lysine 295 is modified (N6-acetyllysine). Substrate-binding residues include arginine 303, arginine 329, serine 334, and arginine 338. Lysine 415 is covalently cross-linked (Glycyl lysine isopeptide (Lys-Gly) (interchain with G-Cter in SUMO1)).

The protein belongs to the lyase 1 family. Adenylosuccinate lyase subfamily. As to quaternary structure, homotetramer. Residues from neighboring subunits contribute catalytic and substrate-binding residues to each active site.

The enzyme catalyses N(6)-(1,2-dicarboxyethyl)-AMP = fumarate + AMP. It carries out the reaction (2S)-2-[5-amino-1-(5-phospho-beta-D-ribosyl)imidazole-4-carboxamido]succinate = 5-amino-1-(5-phospho-beta-D-ribosyl)imidazole-4-carboxamide + fumarate. It functions in the pathway purine metabolism; AMP biosynthesis via de novo pathway; AMP from IMP: step 2/2. It participates in purine metabolism; IMP biosynthesis via de novo pathway; 5-amino-1-(5-phospho-D-ribosyl)imidazole-4-carboxamide from 5-amino-1-(5-phospho-D-ribosyl)imidazole-4-carboxylate: step 2/2. Functionally, catalyzes two non-sequential steps in de novo AMP synthesis: converts (S)-2-(5-amino-1-(5-phospho-D-ribosyl)imidazole-4-carboxamido)succinate (SAICAR) to fumarate plus 5-amino-1-(5-phospho-D-ribosyl)imidazole-4-carboxamide, and thereby also contributes to de novo IMP synthesis, and converts succinyladenosine monophosphate (SAMP) to AMP and fumarate. This chain is Adenylosuccinate lyase (Adsl), found in Mus musculus (Mouse).